The following is a 957-amino-acid chain: MEKTYNPQSIEQTLYQTWEEKGYFKPHGDTSKEAYSIMIPPPNVTGSLHMGHAFQDTIMDTLIRAERMKGKNTLWQVGTDHAGIATQMVVERKIAAEEGKTKHDYGRDAFIDKIWEWKNESGGTITKQLRRLGASVDWDRERFTMDDGLSAATQEVFVRLYEEDLIYRGKRLVNWDPKLHTAISDLEVENKDKKGFMWHFRYPLANGVKTADGKDYIVVATTRPETMLGDTGVAVNPEDPRYKDLIGKEILLPIVNRLIPIVGDEHADMEKGTGCVKITPAHDFNDYEVGKRNQLPMINILTFNADIRESAEVFTTNGEVSDVYSTEIPAKYQGMERFEARKTIVAEFEELGLLEEIKDHDLTVPYGDRGGVVIEPMLTDQWYVRTAPLAEPAVKAVEDGQIQFVPKQYENMYFAWMRDVQDWCISRQLWWGHRIPAWYDNDGKVYVGRTEEEVREKNNLAPVVVLRQDDDVLDTWFSSALWTFGTQGWPENTDALKTFHPSEVLVSGFDIIFFWVARMIMMTMHFVKDEEGNAQVPFKTVYMTGLIRDENGDKMSKSKGNVLDPIDMIDGIDLESLVEKRCGNMMQPQLAKKIEKNTRKTFENGIEPYGTDALRFTLAAMASTGRDINWDMKRLEGYRNFCNKLWNASRYVLMNTEEHDCGMSLSAEERANMEFSLADKWIESQFELAAKEFNAHLDNYRLDMAANTLYEFIWNQFCDWYLELTKPVLWKGTEAQQQATRYMLITVLEKTLRLAHPVLPYITESIWQSVKPLVDGVEGDTIMTQALPQFNEENFNADVVADLEWVKAFITSIRNLRAEYDIAPSKGLEVMIKVADEKDAARIEANKVVLSSLAKLDEIKVLANGEETPACATSLVGKSELMIPMAGLIDKDAELARLAGEVKKTQGEIKRIEGKLGNEGFVAKAPEAVIAKEREKLEGYQETLVKLEAQQETIAAL.

The 'HIGH' region signature appears at 42-52 (PNVTGSLHMGH). A 'KMSKS' region motif is present at residues 554–558 (KMSKS). Lys-557 contributes to the ATP binding site. Residues 890-956 (DKDAELARLA…LEAQQETIAA (67 aa)) adopt a coiled-coil conformation.

The protein belongs to the class-I aminoacyl-tRNA synthetase family. ValS type 1 subfamily. Monomer.

It is found in the cytoplasm. It catalyses the reaction tRNA(Val) + L-valine + ATP = L-valyl-tRNA(Val) + AMP + diphosphate. Its function is as follows. Catalyzes the attachment of valine to tRNA(Val). As ValRS can inadvertently accommodate and process structurally similar amino acids such as threonine, to avoid such errors, it has a 'posttransfer' editing activity that hydrolyzes mischarged Thr-tRNA(Val) in a tRNA-dependent manner. The protein is Valine--tRNA ligase of Aliivibrio fischeri (strain ATCC 700601 / ES114) (Vibrio fischeri).